The sequence spans 198 residues: Nicotinamidase 3 (198 aa).

It belongs to the isochorismatase family.

It carries out the reaction nicotinamide + H2O = nicotinate + NH4(+). It functions in the pathway cofactor biosynthesis; nicotinate biosynthesis; nicotinate from nicotinamide: step 1/1. Functionally, catalyzes the deamidation of nicotinamide, an early step in the NAD(+) salvage pathway. Prevents the accumulation of intracellular nicotinamide, a known inhibitor of poly(ADP-ribose) polymerases (PARP enzymes). The protein is Nicotinamidase 3 of Arabidopsis thaliana (Mouse-ear cress).